The sequence spans 175 residues: Adenylate kinase isoenzyme 6 homolog (175 aa).

Positions 17, 19, 20, 21, and 22 each coordinate ATP. The segment at Asp37–Leu60 is NMPbind. The interval Lys112–Asn122 is LID. Arg113 contributes to the ATP binding site.

It belongs to the adenylate kinase family. AK6 subfamily. In terms of assembly, monomer and homodimer. Interacts with small ribosomal subunit protein uS11. Not a structural component of 43S pre-ribosomes, but transiently interacts with them by binding to uS11.

The protein resides in the cytoplasm. The protein localises to the nucleus. It catalyses the reaction AMP + ATP = 2 ADP. It carries out the reaction ATP + H2O = ADP + phosphate + H(+). Broad-specificity nucleoside monophosphate (NMP) kinase that catalyzes the reversible transfer of the terminal phosphate group between nucleoside triphosphates and monophosphates. Also has ATPase activity. Involved in the late cytoplasmic maturation steps of the 40S ribosomal particles, specifically 18S rRNA maturation. While NMP activity is not required for ribosome maturation, ATPase activity is. Associates transiently with small ribosomal subunit protein uS11. ATP hydrolysis breaks the interaction with uS11. May temporarily remove uS11 from the ribosome to enable a conformational change of the ribosomal RNA that is needed for the final maturation step of the small ribosomal subunit. Its NMP activity may have a role in nuclear energy homeostasis. This Dictyostelium discoideum (Social amoeba) protein is Adenylate kinase isoenzyme 6 homolog.